The following is a 614-amino-acid chain: Chaperone protein DnaK (614 aa).

Thr-176 bears the Phosphothreonine; by autocatalysis mark. The segment at 576-614 is disordered; it reads YQQQQSQGGEAGAANGDASKKDDNTVDGDFHEVHDDDKK. Residues 577-589 are compositionally biased toward low complexity; it reads QQQQSQGGEAGAA. Positions 593–614 are enriched in basic and acidic residues; sequence ASKKDDNTVDGDFHEVHDDDKK.

The protein belongs to the heat shock protein 70 family.

Functionally, acts as a chaperone. This chain is Chaperone protein DnaK, found in Fructilactobacillus sanfranciscensis (Lactobacillus sanfranciscensis).